A 151-amino-acid polypeptide reads, in one-letter code: Multiprotein-bridging factor 1 (151 aa).

Residues 1 to 31 (MSDWESHTVIGQKARAGGSGPRANVARTQGQ) are disordered. The HTH cro/C1-type domain occupies 85–139 (IARVRTEKKMSQKDLATKINEKPTVINDYEAGRAIPNQQVLGKMERALGVKLRGK). The segment at residues 96–115 (QKDLATKINEKPTVINDYEA) is a DNA-binding region (H-T-H motif).

This sequence belongs to the MBF1 family.

Functionally, transcriptional coactivator that stimulates GCN4-dependent transcriptional activity by bridging the DNA-binding region of GCN4 and TBP (SPT15), thereby recruiting TBP to GCN4-bound promoters. Involved in induction of the ribosome quality control (RQC) pathway; a pathway that degrades nascent peptide chains during problematic translation. Required to prevent stalled ribosomes from frameshifting. This chain is Multiprotein-bridging factor 1 (MBF1), found in Candida glabrata (strain ATCC 2001 / BCRC 20586 / JCM 3761 / NBRC 0622 / NRRL Y-65 / CBS 138) (Yeast).